We begin with the raw amino-acid sequence, 402 residues long: MEQPGPITDIAKPGIKAPRDLAISLREEVARILGRSSIGFPGAQPVSFARKHLEELRREDYYVCEKSDGIRYLLYLTVDEEGQEVQYLIDRKNDYWFLPRNSMHFPMPNDIQAFHRGTIIDGELVMDTVPGTNGRKEPRFLVFDLLALDDKAELLNKPLDKRLGYFSAYIYEPYKKLLQQFPQEIPFMAFKVEMKRMELSYGIETMFREVIPALKHDSDGLIFTCRTTPYHFGTDPHILKWKAPHENTLDFRMRLNFPLVQATEAELDEGFPEQFTDYDSVPQAELYVFCGNDGPGGSKYELFPDPLYIAEDEWETLKALGDPLQDRVVECCLDAENRWRLFRFRDDKNEANHTSTVSSVMASIRDGVSDQELLSAATAIKESWKIRAQKRKEQQQQQQPKH.

The active-site N6-GMP-lysine intermediate is Lys66.

This sequence belongs to the eukaryotic GTase family. Heterodimer. The mRNA-capping enzyme is composed of two separate chains alpha and beta, respectively a mRNA guanylyltransferase and an mRNA 5'-triphosphate monophosphatase.

The protein localises to the nucleus. It carries out the reaction a 5'-end diphospho-ribonucleoside in mRNA + GTP + H(+) = a 5'-end (5'-triphosphoguanosine)-ribonucleoside in mRNA + diphosphate. In terms of biological role, second step of mRNA capping. Transfer of the GMP moiety of GTP to the 5'-end of RNA via an enzyme-GMP covalent reaction intermediate. This chain is mRNA-capping enzyme subunit alpha (rnp-2), found in Neurospora crassa (strain ATCC 24698 / 74-OR23-1A / CBS 708.71 / DSM 1257 / FGSC 987).